A 177-amino-acid chain; its full sequence is GTP-dependent dephospho-CoA kinase (177 aa).

GTP-binding residues include glycine 25, tyrosine 31, aspartate 48, valine 49, valine 50, aspartate 67, lysine 69, glutamate 124, and aspartate 147.

Belongs to the GTP-dependent DPCK family. Monomer in solution.

The catalysed reaction is 3'-dephospho-CoA + GTP = GDP + CoA + H(+). Its pathway is cofactor biosynthesis; coenzyme A biosynthesis. In terms of biological role, catalyzes the GTP-dependent phosphorylation of the 3'-hydroxyl group of dephosphocoenzyme A to form coenzyme A (CoA). Can also use UTP, with lower efficiency and has weak activity with ATP, but shows a strong preference for GTP as the phosphate donor. This is GTP-dependent dephospho-CoA kinase from Thermococcus kodakarensis (strain ATCC BAA-918 / JCM 12380 / KOD1) (Pyrococcus kodakaraensis (strain KOD1)).